A 452-amino-acid polypeptide reads, in one-letter code: Isocitrate dehydrogenase [NADP], mitochondrial (452 aa).

A mitochondrion-targeting transit peptide spans 1–39 (MAGYLRAVSSLCRASGSTRTWAPAALNVPSWPEQPRRHY). An N6-acetyllysine mark is found at K45, K48, K67, and K69. 2 positions are modified to N6-acetyllysine; alternate: K80 and K106. 2 positions are modified to N6-succinyllysine; alternate: K80 and K106. Residues 115–117 (TIT) and R122 each bind NADP(+). T117 contributes to the D-threo-isocitrate binding site. D-threo-isocitrate is bound by residues 134 to 140 (SPNGTIR) and R149. K155 carries the N6-acetyllysine modification. An N6-acetyllysine; alternate modification is found at K166. K166 carries the N6-succinyllysine; alternate modification. Residue R172 participates in D-threo-isocitrate binding. K180 and K193 each carry N6-acetyllysine; alternate. N6-succinyllysine; alternate occurs at positions 180 and 193. K199 bears the N6-acetyllysine mark. Position 256 is an N6-acetyllysine; alternate (K256). K256 is modified (N6-succinyllysine; alternate). Residues K263, K272, K275, and K280 each carry the N6-acetyllysine modification. K282 bears the N6-acetyllysine; alternate mark. K282 carries the N6-succinyllysine; alternate modification. D291 provides a ligand contact to Mn(2+). K299 contacts NADP(+). D314 is a binding site for Mn(2+). NADP(+)-binding positions include 349-354 (GTVTRH) and N367. An N6-acetyllysine; alternate modification is found at K384. The residue at position 384 (K384) is an N6-succinyllysine; alternate. 3 positions are modified to N6-acetyllysine: K400, K413, and K442.

Belongs to the isocitrate and isopropylmalate dehydrogenases family. In terms of assembly, homodimer. It depends on Mg(2+) as a cofactor. Mn(2+) is required as a cofactor. Acetylation at Lys-413 dramatically reduces catalytic activity. Deacetylated by SIRT3.

It localises to the mitochondrion. The catalysed reaction is D-threo-isocitrate + NADP(+) = 2-oxoglutarate + CO2 + NADPH. Functionally, plays a role in intermediary metabolism and energy production. It may tightly associate or interact with the pyruvate dehydrogenase complex. This chain is Isocitrate dehydrogenase [NADP], mitochondrial (Idh2), found in Rattus norvegicus (Rat).